The chain runs to 422 residues: uncharacterized protein (422 aa).

The next 12 helical transmembrane spans lie at 23 to 43 (IVKI…LIYD), 47 to 67 (AIGT…LAPV), 90 to 110 (AIVL…WFVM), 112 to 132 (LMIV…ALIP), 151 to 171 (AQIV…FISP), 172 to 192 (SYTM…VLFI), 228 to 248 (ILYP…PWEA), 263 to 283 (IVYS…GFVL), 291 to 308 (YGLL…AFFI), 318 to 340 (VFFA…YTII), 352 to 372 (VYAV…VICG), and 381 to 401 (GKVI…ILLF).

Belongs to the major facilitator superfamily.

Its subcellular location is the cell membrane. This is an uncharacterized protein from Bacillus subtilis (strain 168).